The sequence spans 303 residues: Serine/threonine-protein phosphatase PP-X homolog 1 (303 aa).

Positions 51, 53, 79, and 111 each coordinate Mn(2+). Residue His112 is the Proton donor of the active site. The Mn(2+) site is built by His161 and His235.

This sequence belongs to the PPP phosphatase family. PP-4 (PP-X) subfamily. It depends on Mn(2+) as a cofactor.

The enzyme catalyses O-phospho-L-seryl-[protein] + H2O = L-seryl-[protein] + phosphate. It carries out the reaction O-phospho-L-threonyl-[protein] + H2O = L-threonyl-[protein] + phosphate. The protein is Serine/threonine-protein phosphatase PP-X homolog 1 (Ppx1) of Paramecium tetraurelia.